The sequence spans 412 residues: Lipoyl synthase, mitochondrial (412 aa).

A mitochondrion-targeting transit peptide spans 1–28; it reads MASIAPSLKRAHAPLRKALTASSTIRAF. Residues Cys-124, Cys-129, Cys-135, Cys-155, Cys-159, Cys-162, and Ser-372 each coordinate [4Fe-4S] cluster. One can recognise a Radical SAM core domain in the interval 138-361; that stretch reads GSDKNAATAT…NKRALDMGFL (224 aa).

This sequence belongs to the radical SAM superfamily. Lipoyl synthase family. The cofactor is [4Fe-4S] cluster.

The protein localises to the mitochondrion. The catalysed reaction is [[Fe-S] cluster scaffold protein carrying a second [4Fe-4S](2+) cluster] + N(6)-octanoyl-L-lysyl-[protein] + 2 oxidized [2Fe-2S]-[ferredoxin] + 2 S-adenosyl-L-methionine + 4 H(+) = [[Fe-S] cluster scaffold protein] + N(6)-[(R)-dihydrolipoyl]-L-lysyl-[protein] + 4 Fe(3+) + 2 hydrogen sulfide + 2 5'-deoxyadenosine + 2 L-methionine + 2 reduced [2Fe-2S]-[ferredoxin]. It participates in protein modification; protein lipoylation via endogenous pathway; protein N(6)-(lipoyl)lysine from octanoyl-[acyl-carrier-protein]: step 2/2. Catalyzes the radical-mediated insertion of two sulfur atoms into the C-6 and C-8 positions of the octanoyl moiety bound to the lipoyl domains of lipoate-dependent enzymes, thereby converting the octanoylated domains into lipoylated derivatives. This is Lipoyl synthase, mitochondrial from Fusarium vanettenii (strain ATCC MYA-4622 / CBS 123669 / FGSC 9596 / NRRL 45880 / 77-13-4) (Fusarium solani subsp. pisi).